Here is a 141-residue protein sequence, read N- to C-terminus: Putative pre-16S rRNA nuclease (141 aa).

This sequence belongs to the YqgF nuclease family.

The protein resides in the cytoplasm. In terms of biological role, could be a nuclease involved in processing of the 5'-end of pre-16S rRNA. The protein is Putative pre-16S rRNA nuclease of Amoebophilus asiaticus (strain 5a2).